The following is a 142-amino-acid chain: Putative pre-16S rRNA nuclease (142 aa).

Belongs to the YqgF nuclease family.

Its subcellular location is the cytoplasm. Functionally, could be a nuclease involved in processing of the 5'-end of pre-16S rRNA. The polypeptide is Putative pre-16S rRNA nuclease (Staphylococcus epidermidis (strain ATCC 35984 / DSM 28319 / BCRC 17069 / CCUG 31568 / BM 3577 / RP62A)).